The following is a 492-amino-acid chain: Amphoterin-induced protein 1 (492 aa).

The signal sequence occupies residues 1–27; that stretch reads MQPQRDLRGLWLLLLSVFLLLFEVARA. The 34-residue stretch at 28 to 61 folds into the LRRNT domain; the sequence is GRSVVSCPANCLCASNILSCSKQQLPNVPQSLPS. Residues 28-371 are Extracellular-facing; it reads GRSVVSCPAN…LHGHHDTLNT (344 aa). 2 cysteine pairs are disulfide-bonded: cysteine 34–cysteine 40 and cysteine 38–cysteine 47. 6 LRR repeats span residues 62–83, 87–108, 111–132, 135–156, 159–180, and 186–206; these read YTALLDLSHNNLSRLRAEWTPT, NLHSLLLSHNHLNFISSEAFVP, NLRYLDLSSNHLHTLDEFLFSD, ALEVLLLYNNHIVVVDRNAFED, QLQKLYLSQNQISRFPVELIKD, and KLMLLDLSSNKLKKLPLTDLQ. Asparagine 72 carries N-linked (GlcNAc...) asparagine glycosylation. The region spanning 208–272 is the LRRCT domain; that stretch reads LPAWVKNGLY…FSLDFFNCSE (65 aa). Cystine bridges form between cysteine 225–cysteine 253, cysteine 227–cysteine 270, and cysteine 290–cysteine 340. N-linked (GlcNAc...) asparagine glycosylation is found at asparagine 269, asparagine 315, asparagine 348, and asparagine 359. The Ig-like C2-type domain maps to 269–352; that stretch reads NCSEYKESAW…MGETFNETLS (84 aa). The helical transmembrane segment at 372–392 threads the bilayer; sequence AYTTLVGCILSVVLVLIYLYL. The Cytoplasmic segment spans residues 393-492; sequence TPCRCWCRGV…SVFSDTPIVV (100 aa). Residues 404-492 form a disordered region; sequence KPSSHQGDSL…SVFSDTPIVV (89 aa). A compositionally biased stretch (polar residues) spans 407 to 423; that stretch reads SHQGDSLSSSMLSTTPN. Basic and acidic residues predominate over residues 430–441; the sequence is GDKDDGFDRRVA. Phosphoserine occurs at positions 476 and 480.

It belongs to the immunoglobulin superfamily. AMIGO family. As to quaternary structure, homodimer, and heterodimer with AMIGO2 and AMIGO3. Interacts with KCNB1. In terms of tissue distribution, expressed in hippocampal and cortical neurons (at protein level). High levels in cerebellum, cerebrum, and retina. Low levels in liver, kidney, small intestine, spleen, lung and heart.

It is found in the cell membrane. The protein localises to the perikaryon. The protein resides in the cell projection. It localises to the dendrite. Functionally, promotes growth and fasciculation of neurites from cultured hippocampal neurons. May be involved in fasciculation as well as myelination of developing neural axons. May have a role in regeneration as well as neural plasticity in the adult nervous system. May mediate homophilic as well as heterophilic cell-cell interaction and contribute to signal transduction through its intracellular domain. Assembled with KCNB1 modulates the gating characteristics of the delayed rectifier voltage-dependent potassium channel KCNB1. This is Amphoterin-induced protein 1 from Mus musculus (Mouse).